The chain runs to 338 residues: Tetraacyldisaccharide 4'-kinase (338 aa).

51–58 (HVGGAGKT) serves as a coordination point for ATP.

The protein belongs to the LpxK family.

The enzyme catalyses a lipid A disaccharide + ATP = a lipid IVA + ADP + H(+). It functions in the pathway glycolipid biosynthesis; lipid IV(A) biosynthesis; lipid IV(A) from (3R)-3-hydroxytetradecanoyl-[acyl-carrier-protein] and UDP-N-acetyl-alpha-D-glucosamine: step 6/6. Functionally, transfers the gamma-phosphate of ATP to the 4'-position of a tetraacyldisaccharide 1-phosphate intermediate (termed DS-1-P) to form tetraacyldisaccharide 1,4'-bis-phosphate (lipid IVA). The polypeptide is Tetraacyldisaccharide 4'-kinase (Bradyrhizobium diazoefficiens (strain JCM 10833 / BCRC 13528 / IAM 13628 / NBRC 14792 / USDA 110)).